We begin with the raw amino-acid sequence, 615 residues long: Protein DlpA (615 aa).

The protein belongs to the isocitrate and isopropylmalate dehydrogenases family. It to M.jannaschii MJ0644 in the C-terminal section.

The polypeptide is Protein DlpA (dlpA) (Legionella pneumophila subsp. pneumophila (strain Philadelphia 1 / ATCC 33152 / DSM 7513)).